Here is a 129-residue protein sequence, read N- to C-terminus: Large ribosomal subunit protein uL22 (129 aa).

This sequence belongs to the universal ribosomal protein uL22 family. As to quaternary structure, part of the 50S ribosomal subunit.

Functionally, this protein binds specifically to 23S rRNA; its binding is stimulated by other ribosomal proteins, e.g. L4, L17, and L20. It is important during the early stages of 50S assembly. It makes multiple contacts with different domains of the 23S rRNA in the assembled 50S subunit and ribosome. The globular domain of the protein is located near the polypeptide exit tunnel on the outside of the subunit, while an extended beta-hairpin is found that lines the wall of the exit tunnel in the center of the 70S ribosome. This chain is Large ribosomal subunit protein uL22, found in Brucella suis biovar 1 (strain 1330).